A 1236-amino-acid chain; its full sequence is Structural polyprotein (1236 aa).

The segment at 1-36 is necessary for nucleocapsid assembly and virus assembly; it reads MFPYPQLNFPPVYPTNPMAYRDPNPPRCRWRPFRPP. Residues 37 to 70 form a host transcription inhibition region; it reads LAAQIEDLRRSIANLTFKQRSPNPPPGPPPKKKK. Positions 44-51 match the Supraphysiological nuclear export signal motif; the sequence is LRRSIANL. Residues 44-103 are disordered; that stretch reads LRRSIANLTFKQRSPNPPPGPPPKKKKSAPKPKPTQPKKKKQQAKKTKRKPKPGKRQRMC. The span at 66–102 shows a compositional bias: basic residues; that stretch reads PKKKKSAPKPKPTQPKKKKQQAKKTKRKPKPGKRQRM. The Nuclear localization signal motif lies at 67 to 70; that stretch reads KKKK. The tract at residues 83 to 111 is binding to the viral RNA; it reads KKQQAKKTKRKPKPGKRQRMCMKLESDKT. The ribosome-binding stretch occupies residues 96–110; it reads PGKRQRMCMKLESDK. S108 bears the Phosphoserine mark. The region spanning 110 to 259 is the Peptidase S3 domain; the sequence is KTFPIMLNGQ…KDTPEGSEPW (150 aa). T111 is subject to Phosphothreonine. H136 (charge relay system) is an active-site residue. Positions 152-157 are interaction with spike glycoprotein E2; the sequence is KKASMY. Catalysis depends on charge relay system residues D158 and S210. Residues 244-248 form an interaction with spike glycoprotein E2 region; the sequence is QKGVT. Residues 260 to 271 form a functions as an uncleaved signal peptide for the precursor of protein E3/E2 region; the sequence is SLVTALCVLSNV. The Extracellular segment spans residues 260–687; that stretch reads SLVTALCVLS…YYHRHPVYTV (428 aa). Intrachain disulfides connect C266–C275, C335–C443, C338–C344, C410–C424, C471–C585, C520–C545, and C522–C539. A glycan (N-linked (GlcNAc...) asparagine; by host) is linked at N270. N-linked (GlcNAc...) asparagine; by host glycosylation occurs at N515. N637 carries N-linked (GlcNAc...) asparagine; by host glycosylation. A helical membrane pass occupies residues 688–708; it reads IVLCGVALAILVGTASSAACI. The Cytoplasmic portion of the chain corresponds to 709-742; sequence AKARRDCLTPYALAPNATVPTALAVLCCIRPTNA. Residues 710–714 are interaction with the capsid protein; sequence KARRD. S-palmitoyl cysteine; by host attachment occurs at residues C715, C735, and C736. C715 and C736 are joined by a disulfide. Residues 717 to 737 are transient transmembrane before p62-6K protein processing; the sequence is TPYALAPNATVPTALAVLCCI. Residues 743–767 are Extracellular-facing; the sequence is ETFGETLNHLWFNNQPFLWAQLCIP. 2 helical membrane-spanning segments follow: residues 768–788 and 789–809; these read LAAL…LLVA and GVCL…NVPG. The Extracellular portion of the chain corresponds to 810–1205; that stretch reads IPYKALVERA…QAAVSKTSWN (396 aa). Cystine bridges form between C846-C911, C859-C891, C860-C893, and C865-C875. The tract at residues 881 to 898 is E1 fusion peptide loop; that stretch reads VYPFMWGGAQCFCDSENT. N-linked (GlcNAc...) asparagine; by host glycosylation is found at N936, N1042, and N1067. Cystine bridges form between C1056–C1068, C1098–C1173, C1103–C1177, and C1125–C1167. The helical transmembrane segment at 1206–1226 threads the bilayer; the sequence is WLLALFGGASSLIVVGLIVLV. Over 1227-1236 the chain is Cytoplasmic; that stretch reads CSSMLINTRR.

Homodimer. Homomultimer. Interacts with host karyopherin KPNA4; this interaction allows the nuclear import of the viral capsid protein. Interacts with spike glycoprotein E2. Interacts with host IRAK1; the interaction leads to inhibition of IRAK1-dependent signaling. Part of a tetrameric complex composed of host CRM1, host importin alpha/beta dimer and the viral capsid; this complex blocks the receptor-mediated transport through the nuclear pore. Interacts with host phosphatase PPP1CA; this interaction dephosphorylates the capsid protein, which increases its ability to bind to the viral genome. In terms of assembly, the precursor of protein E3/E2 and E1 form a heterodimer shortly after synthesis. As to quaternary structure, interacts with spike glycoprotein E2. The precursor of protein E3/E2 and E1 form a heterodimer shortly after synthesis. Processing of the precursor of protein E3/E2 into E2 and E3 results in a heterodimer of the spike glycoproteins E2 and E1. Spike at virion surface are constituted of three E2-E1 heterodimers. After target cell attachment and endocytosis, E1 change conformation to form homotrimers. Interacts with 6K protein. Interacts with spike glycoprotein E1. Processing of the precursor of protein E3/E2 into E2 and E3 results in a heterodimer of the spike glycoproteins E2 and E1. Spike at virion surface are constituted of a trimer of E2-E1 heterodimers. Interacts with 6K protein. The E2-E1 heterodimer interacts with host PCDH10 (via domain Cadherin 1); this interaction mediates viral entry to the host cell. In terms of assembly, oligomer. Interacts with spike glycoprotein E1. Interacts with spike glycoprotein E2. In terms of processing, structural polyprotein: Specific enzymatic cleavages in vivo yield mature proteins. Capsid protein is auto-cleaved during polyprotein translation, unmasking a signal peptide at the N-terminus of the precursor of E3/E2. The remaining polyprotein is then targeted to the host endoplasmic reticulum, where host signal peptidase cleaves it into pE2, 6K and E1 proteins. pE2 is further processed to mature E3 and E2 by host furin in trans-Golgi vesicle. Phosphorylated on serine and threonine residues. Post-translationally, palmitoylated via thioester bonds. These palmitoylations may induce disruption of the C-terminus transmembrane. This would result in the reorientation of E2 C-terminus from lumenal to cytoplasmic side. In terms of processing, N-glycosylated. Palmitoylated via thioester bonds.

The protein localises to the virion. The protein resides in the host cytoplasm. It is found in the host cell membrane. It localises to the host nucleus. Its subcellular location is the virion membrane. The protein localises to the host Golgi apparatus. The protein resides in the host trans-Golgi network. It is found in the host endoplasmic reticulum. The enzyme catalyses Autocatalytic release of the core protein from the N-terminus of the togavirus structural polyprotein by hydrolysis of a -Trp-|-Ser- bond.. In terms of biological role, forms an icosahedral capsid with a T=4 symmetry composed of 240 copies of the capsid protein surrounded by a lipid membrane through which penetrate 80 spikes composed of trimers of E1-E2 heterodimers. The capsid protein binds to the viral RNA genome at a site adjacent to a ribosome binding site for viral genome translation following genome release. Possesses a protease activity that results in its autocatalytic cleavage from the nascent structural protein. Following its self-cleavage, the capsid protein transiently associates with ribosomes, and within several minutes the protein binds to viral RNA and rapidly assembles into icosahedric core particles. The resulting nucleocapsid eventually associates with the cytoplasmic domain of the spike glycoprotein E2 at the cell membrane, leading to budding and formation of mature virions. In case of infection, new virions attach to target cells and after clathrin-mediated endocytosis their membrane fuses with the host endosomal membrane. This leads to the release of the nucleocapsid into the cytoplasm, followed by an uncoating event necessary for the genomic RNA to become accessible. The uncoating might be triggered by the interaction of capsid proteins with ribosomes. Binding of ribosomes would release the genomic RNA since the same region is genomic RNA-binding and ribosome-binding. Specifically inhibits interleukin-1 receptor-associated kinase 1/IRAK1-dependent signaling during viral entry, representing a means by which the alphaviruses may evade innate immune detection and activation prior to viral gene expression. Inhibits host transcription. Forms a tetrameric complex with XPO1/CRM1 and the nuclear import receptor importin. This complex blocks the central channel of host nuclear pores thereby inhibiting the receptor-mediated nuclear transport and thus the host mRNA and rRNA transcription. The inhibition of transcription is linked to a cytopathic effect on the host cell. Functionally, provides the signal sequence for the translocation of the precursor of protein E3/E2 to the host endoplasmic reticulum. Furin-cleaved E3 remains associated with spike glycoprotein E1 and mediates pH protection of the latter during the transport via the secretory pathway. After virion release from the host cell, the assembly protein E3 is gradually released in the extracellular space. Its function is as follows. Plays an essential role in viral attachment to target host cell, by binding to the cell receptor PCDH10. Some specific strains may also bind host receptors VLDLR and LRP8/APOER2. Synthesized as a pE2 precursor which is processed by furin at the cell membrane just before virion budding, giving rise to E2-E1 heterodimer. The pE2-E1 heterodimer is stable, whereas E2-E1 is unstable and dissociate at low pH. pE2 is processed at the last step, presumably to avoid E1 fusion activation before its final export to cell surface. E2 C-terminus contains a transitory transmembrane that would be disrupted by palmitoylation, resulting in reorientation of the C-terminal tail from lumenal to cytoplasmic side. This step is critical since E2 C-terminus is involved in budding by interacting with capsid proteins. This release of E2 C-terminus in cytoplasm occurs lately in protein export, and precludes premature assembly of particles at the endoplasmic reticulum membrane. Protein 6K: Acts as a viroporin that participates in virus glycoprotein processing and transport to the plasma membrane, cell permeabilization and budding of viral particles. Disrupts the calcium homeostasis of the cell, probably at the endoplasmic reticulum level resulting in the increased levels of cytoplasmic calcium. Because of its lipophilic properties, the 6K protein is postulated to influence the selection of lipids that interact with the transmembrane domains of the glycoproteins, which, in turn, affects the deformability of the bilayer required for the extreme curvature that occurs as budding proceeds. Present in low amount in virions, about 3% compared to viral glycoproteins. In terms of biological role, class II viral fusion protein. Fusion activity is inactive as long as E1 is bound to E2 in mature virion. After virus attachment to target cell receptor PCDH10 and endocytosis, acidification of the endosome induce dissociation of E1/E2 heterodimer and concomitant trimerization of the E1 subunits. This E1 trimer is fusion active, and promotes release of viral nucleocapsid in cytoplasm after endosome and viral membrane fusion. Efficient fusion requires the presence of cholesterol and sphingolipid in the target membrane. This chain is Structural polyprotein, found in Western equine encephalitis virus (WEEV).